Reading from the N-terminus, the 469-residue chain is Ribulose bisphosphate carboxylase large chain (469 aa).

Lysine 8 bears the N6,N6,N6-trimethyllysine mark. Asparagine 117 and threonine 167 together coordinate substrate. Residue lysine 169 is the Proton acceptor of the active site. Lysine 171 contributes to the substrate binding site. Mg(2+) contacts are provided by lysine 195, aspartate 197, and glutamate 198. Lysine 195 is modified (N6-carboxylysine). Histidine 288 acts as the Proton acceptor in catalysis. Positions 289, 321, and 373 each coordinate substrate.

The protein belongs to the RuBisCO large chain family. Type I subfamily. As to quaternary structure, heterohexadecamer of 8 large chains and 8 small chains; disulfide-linked. The disulfide link is formed within the large subunit homodimers. Requires Mg(2+) as cofactor. The disulfide bond which can form in the large chain dimeric partners within the hexadecamer appears to be associated with oxidative stress and protein turnover.

The protein localises to the plastid. Its subcellular location is the chloroplast. It catalyses the reaction 2 (2R)-3-phosphoglycerate + 2 H(+) = D-ribulose 1,5-bisphosphate + CO2 + H2O. It carries out the reaction D-ribulose 1,5-bisphosphate + O2 = 2-phosphoglycolate + (2R)-3-phosphoglycerate + 2 H(+). Its function is as follows. RuBisCO catalyzes two reactions: the carboxylation of D-ribulose 1,5-bisphosphate, the primary event in carbon dioxide fixation, as well as the oxidative fragmentation of the pentose substrate in the photorespiration process. Both reactions occur simultaneously and in competition at the same active site. In Coleonema pulchellum (Confetti bush), this protein is Ribulose bisphosphate carboxylase large chain.